A 329-amino-acid chain; its full sequence is Glycerol-3-phosphate dehydrogenase [NAD(P)+] (329 aa).

Residues S13, W14, H34, and K105 each contribute to the NADPH site. Sn-glycerol 3-phosphate-binding residues include K105, G134, and S136. A138 contacts NADPH. The sn-glycerol 3-phosphate site is built by K189, D242, S252, R253, and N254. K189 functions as the Proton acceptor in the catalytic mechanism. R253 is an NADPH binding site. NADPH-binding residues include V277 and E279.

The protein belongs to the NAD-dependent glycerol-3-phosphate dehydrogenase family.

It is found in the cytoplasm. It carries out the reaction sn-glycerol 3-phosphate + NAD(+) = dihydroxyacetone phosphate + NADH + H(+). The enzyme catalyses sn-glycerol 3-phosphate + NADP(+) = dihydroxyacetone phosphate + NADPH + H(+). The protein operates within membrane lipid metabolism; glycerophospholipid metabolism. Functionally, catalyzes the reduction of the glycolytic intermediate dihydroxyacetone phosphate (DHAP) to sn-glycerol 3-phosphate (G3P), the key precursor for phospholipid synthesis. This Legionella pneumophila (strain Paris) protein is Glycerol-3-phosphate dehydrogenase [NAD(P)+].